A 372-amino-acid polypeptide reads, in one-letter code: Putative 26S proteasome regulatory subunit homolog MTBMA_c13930 (372 aa).

164 to 171 (GSPGTGKT) is an ATP binding site.

Belongs to the AAA ATPase family.

Functionally, the 26S proteasome is involved in the ATP-dependent degradation of ubiquitinated proteins. The regulatory (or ATPase) complex confers ATP dependency and substrate specificity to the 26S complex. This chain is Putative 26S proteasome regulatory subunit homolog MTBMA_c13930, found in Methanothermobacter marburgensis (strain ATCC BAA-927 / DSM 2133 / JCM 14651 / NBRC 100331 / OCM 82 / Marburg) (Methanobacterium thermoautotrophicum).